A 602-amino-acid polypeptide reads, in one-letter code: Pyranose dehydrogenase 1 (602 aa).

An N-terminal signal peptide occupies residues 1-25 (MLPRVTKLNSRLLSLALLGIQIARG). N-linked (GlcNAc...) asparagine glycosylation is present at Asn100. His128 carries the tele-8alpha-FAD histidine modification. N-linked (GlcNAc...) asparagine glycans are attached at residues Asn200, Asn277, and Asn344. His537 (proton acceptor) is an active-site residue. The active site involves His581.

It belongs to the GMC oxidoreductase family. As to quaternary structure, monomer. It depends on FAD as a cofactor. N-glycosylated.

It localises to the secreted. The enzyme catalyses pyranose + acceptor = pyranos-2-ulose + reduced acceptor.. The catalysed reaction is pyranose + acceptor = pyranos-3-ulose + reduced acceptor.. It carries out the reaction pyranose + acceptor = pyranos-2,3-diulose + reduced acceptor.. It catalyses the reaction a pyranoside + acceptor = a pyranosid-3-ulose + reduced acceptor.. The enzyme catalyses a pyranoside + acceptor = a pyranosid-3,4-diulose + reduced acceptor.. In terms of biological role, catalyzes the single-oxidation or sequential double oxidation reaction of carbohydrates primarily at carbon-2 and/or carbon-3 with the concomitant reduction of the flavin. The enzyme exhibits a broad sugar substrate specificity, oxidizing different aldopyranoses to the corresponding C-1, C-2, C-3 or C-1,2, C-2,3 and C-3,4 (di)dehydro sugars with substrate-specific regioselectivity. Accepts only a narrow range of electron acceptors such as substituted benzoquinones and complexed metal ions and reacts extremely slowly with O(2) as acceptor. May play a role in the natural recycling of plant matter by oxidizing all major monosaccharides in lignocellulose and by reducing quinone compounds or reactive radical species generated during lignin depolymerization. The protein is Pyranose dehydrogenase 1 of Leucoagaricus meleagris (Western flat-topped agaric).